We begin with the raw amino-acid sequence, 100 residues long: NADH-quinone oxidoreductase subunit K 2 (100 aa).

3 helical membrane-spanning segments follow: residues 4-24 (LWWF…GVLL), 28-48 (ILVV…NFIA), and 60-80 (IFAI…LGIL).

It belongs to the complex I subunit 4L family. NDH-1 is composed of 14 different subunits. Subunits NuoA, H, J, K, L, M, N constitute the membrane sector of the complex.

It localises to the cell inner membrane. It carries out the reaction a quinone + NADH + 5 H(+)(in) = a quinol + NAD(+) + 4 H(+)(out). Its function is as follows. NDH-1 shuttles electrons from NADH, via FMN and iron-sulfur (Fe-S) centers, to quinones in the respiratory chain. The immediate electron acceptor for the enzyme in this species is believed to be ubiquinone. Couples the redox reaction to proton translocation (for every two electrons transferred, four hydrogen ions are translocated across the cytoplasmic membrane), and thus conserves the redox energy in a proton gradient. The polypeptide is NADH-quinone oxidoreductase subunit K 2 (Rhizobium etli (strain CIAT 652)).